Reading from the N-terminus, the 355-residue chain is Protein RecA (355 aa).

ATP is bound at residue Gly73–Thr80.

The protein belongs to the RecA family.

Its subcellular location is the cytoplasm. In terms of biological role, can catalyze the hydrolysis of ATP in the presence of single-stranded DNA, the ATP-dependent uptake of single-stranded DNA by duplex DNA, and the ATP-dependent hybridization of homologous single-stranded DNAs. It interacts with LexA causing its activation and leading to its autocatalytic cleavage. The protein is Protein RecA of Solidesulfovibrio magneticus (strain ATCC 700980 / DSM 13731 / RS-1) (Desulfovibrio magneticus).